A 253-amino-acid chain; its full sequence is Sugar fermentation stimulation protein homolog (253 aa).

Belongs to the SfsA family.

The protein is Sugar fermentation stimulation protein homolog of Prochlorococcus marinus (strain NATL1A).